The following is a 1250-amino-acid chain: Probable autotransporter YfaL (1250 aa).

Residues 1–28 (MRIIFLRKEYLSLLPSMIASLFSANGVA) form the signal peptide. The tract at residues 914–951 (RSQEVTPPSPPDPDPTPDPDPTPDPDPTPDPEPTPAYQ) is disordered. Copy 1 of the repeat occupies 919–920 (TP). The tract at residues 919-948 (TPPSPPDPDPTPDPDPTPDPDPTPDPEPTP) is 15 X 2 AA approximate tandem repeats of [DTPE]-P. Residues 921–922 (PS) form a 2; approximate repeat. The stretch at 923–924 (PP) is repeat 3. The stretch at 925–926 (DP) is one 4; approximate repeat. A run of 11 repeats spans residues 927–928 (DP), 929–930 (TP), 931–932 (DP), 933–934 (DP), 935–936 (TP), 937–938 (DP), 939–940 (DP), 941–942 (TP), 943–944 (DP), 945–946 (EP), and 947–948 (TP). Positions 928–942 (PTPDPDPTPDPDPTP) are enriched in acidic residues. Positions 980–1250 (AGGDGQTLNL…AGFLSMTVKW (271 aa)) constitute an Autotransporter domain.

Post-translationally, an approximately 170 kDa protein is detected in the outer membrane, while a C-terminal 55 kDa fragment is detected in whole cells. The full-length putative autotransporter may be cleaved to release the mature protein from the outer membrane; Pefabloc SC, a Ser-Thr protease inhibitor prevents the appearance of the 55 kDa C--terminal fragment.

It is found in the periplasm. The protein resides in the secreted. It localises to the cell surface. The protein localises to the cell outer membrane. In terms of biological role, probably an autotransporter. Upon overexpression shows increased adherence to polyvinyl chloride (PVC) plates, increased mature biofilm formation. The chain is Probable autotransporter YfaL (yfaL) from Escherichia coli (strain K12).